The primary structure comprises 110 residues: UPF0122 protein SPG_1182 (110 aa).

Belongs to the UPF0122 family.

Functionally, might take part in the signal recognition particle (SRP) pathway. This is inferred from the conservation of its genetic proximity to ftsY/ffh. May be a regulatory protein. The polypeptide is UPF0122 protein SPG_1182 (Streptococcus pneumoniae serotype 19F (strain G54)).